We begin with the raw amino-acid sequence, 335 residues long: Leukocyte cell-derived chemotaxin-2 homolog (335 aa).

Residues 1-20 form the signal peptide; sequence MHLRTLHFLILIGIFIGGQT. 2 cysteine pairs are disulfide-bonded: cysteine 28–cysteine 66 and cysteine 39–cysteine 46. Aspartate 63 serves as a coordination point for Zn(2+). Residue asparagine 317 is glycosylated (N-linked (GlcNAc...) asparagine).

This sequence belongs to the LECT2/MIM-1 family. In terms of assembly, component of a multi-protein dma-1 receptor-ligand complex, which is activated upon binding of lect-2, mnr-1 and sax-7 ligands to promote the morphogenesis of dendrites which extend from the PVD neuronal body. Within the complex interacts with sax-7; the interaction is required for lect-2 dendritic localization and enhances the binding of the mnr-1 and sax-7 ligands to the dma-1 receptor-ligand complex. As to expression, expressed in body wall muscle cells, along the boundary of the lateral hypodermis, seam cells, processes of the nervous system including commissures, sensory dendrites in the head, and lateral nerve tracts, and motor neurons and some mechanosensory neurons such as ALM.

It is found in the secreted. It localises to the cell junction. The protein resides in the extracellular space. The protein localises to the extracellular matrix. Its subcellular location is the basement membrane. It is found in the cell projection. It localises to the dendrite. The protein resides in the perikaryon. The protein localises to the cell surface. Muscle-derived dendritic guidance cue, which is required for the formation of somatosensory dendritic arbors which extend from PVD and FLP sensory neurons during development. Ligand of a multi-protein dma-1 receptor-ligand complex, which is activated upon binding of lect-2, mnr-1 and sax-7 ligands to control the growth of dendrites that extend anteriorly from the PVD neuronal cell body. Enhances the binding of the mnr-1 and sax-7 ligands to the dma-1 receptor-ligand complex. Restricts the growth of secondary PVD dendritic branches and any irregularly positioned ectopic tertiary dendritic branches that originate from secondary branches, and promotes the formation of stable higher order dendritic branches. In particular, it is required for the formation of quaternary PVD dendritic branches and promotes their innervation of body wall muscles. Promotes self-avoidance of tertiary dendritic branches of PVD sensory neurons. Not required for the growth of dendrites that extend from AIY and PVQ interneurons, DVB GABergic neurons, PLM and ALM mechanosensory neurons, AFD sensory neurons and DD/VD and DA/DB motor neurons. This chain is Leukocyte cell-derived chemotaxin-2 homolog, found in Caenorhabditis elegans.